Consider the following 745-residue polypeptide: uncharacterized protein (745 aa).

The region spanning 158–256 (NQVCDYIELH…HQTPKQYRGD (99 aa)) is the HTH araC/xylS-type domain. DNA-binding regions (H-T-H motif) lie at residues 175–196 (SELS…TESL) and 223–246 (ITDI…KHFT).

This is an uncharacterized protein from Staphylococcus aureus (strain COL).